Here is a 548-residue protein sequence, read N- to C-terminus: Probable bifunctional tRNA threonylcarbamoyladenosine biosynthesis protein (548 aa).

The interval M1–W338 is kae1. Positions 122 and 126 each coordinate Fe cation. L-threonylcarbamoyladenylate-binding positions include N143–A147, D175, G188, E192, and N271. D299 is a binding site for Fe cation. The Protein kinase domain occupies R349–Q548. ATP is bound by residues V355–V362 and K371. A compositionally biased stretch (basic and acidic residues) spans E390–R404. The tract at residues E390 to R413 is disordered. D460 functions as the Proton acceptor; for kinase activity in the catalytic mechanism.

In the N-terminal section; belongs to the KAE1 / TsaD family. This sequence in the C-terminal section; belongs to the protein kinase superfamily. Tyr protein kinase family. BUD32 subfamily. As to quaternary structure, component of the KEOPS complex that consists of Kae1, Bud32, Cgi121 and Pcc1; the whole complex dimerizes. The cofactor is Fe(2+).

The protein resides in the cytoplasm. It catalyses the reaction L-seryl-[protein] + ATP = O-phospho-L-seryl-[protein] + ADP + H(+). The catalysed reaction is L-threonyl-[protein] + ATP = O-phospho-L-threonyl-[protein] + ADP + H(+). It carries out the reaction L-threonylcarbamoyladenylate + adenosine(37) in tRNA = N(6)-L-threonylcarbamoyladenosine(37) in tRNA + AMP + H(+). Its function is as follows. Required for the formation of a threonylcarbamoyl group on adenosine at position 37 (t(6)A37) in tRNAs that read codons beginning with adenine. Is a component of the KEOPS complex that is probably involved in the transfer of the threonylcarbamoyl moiety of threonylcarbamoyl-AMP (TC-AMP) to the N6 group of A37. The Kae1 domain likely plays a direct catalytic role in this reaction. The Bud32 domain probably displays kinase activity that regulates Kae1 function. In Haloarcula marismortui (strain ATCC 43049 / DSM 3752 / JCM 8966 / VKM B-1809) (Halobacterium marismortui), this protein is Probable bifunctional tRNA threonylcarbamoyladenosine biosynthesis protein.